The primary structure comprises 715 residues: Fatty acid oxidation complex subunit alpha (715 aa).

The segment at 1-190 (MTTTSAFMLN…KAGLVDDVVP (190 aa)) is enoyl-CoA hydratase. The segment at 306 to 715 (GPLNSVGILG…WTNGETDQGN (410 aa)) is 3-hydroxyacyl-CoA dehydrogenase.

The protein in the N-terminal section; belongs to the enoyl-CoA hydratase/isomerase family. It in the central section; belongs to the 3-hydroxyacyl-CoA dehydrogenase family. In terms of assembly, heterotetramer of two alpha chains (FadJ) and two beta chains (FadI).

It localises to the cytoplasm. It carries out the reaction a (3S)-3-hydroxyacyl-CoA = a (2E)-enoyl-CoA + H2O. The catalysed reaction is a 4-saturated-(3S)-3-hydroxyacyl-CoA = a (3E)-enoyl-CoA + H2O. The enzyme catalyses a (3S)-3-hydroxyacyl-CoA + NAD(+) = a 3-oxoacyl-CoA + NADH + H(+). It catalyses the reaction (3S)-3-hydroxybutanoyl-CoA = (3R)-3-hydroxybutanoyl-CoA. The protein operates within lipid metabolism; fatty acid beta-oxidation. Catalyzes the formation of a hydroxyacyl-CoA by addition of water on enoyl-CoA. Also exhibits 3-hydroxyacyl-CoA epimerase and 3-hydroxyacyl-CoA dehydrogenase activities. In Salmonella paratyphi B (strain ATCC BAA-1250 / SPB7), this protein is Fatty acid oxidation complex subunit alpha.